The sequence spans 326 residues: NDRG-like protein (326 aa).

The protein belongs to the NDRG family.

This Dictyostelium discoideum (Social amoeba) protein is NDRG-like protein.